Reading from the N-terminus, the 172-residue chain is RNA silencing suppressor p19 (172 aa).

Over residues 1–20 (MERAIQGNDTREQANGERWD) the composition is skewed to basic and acidic residues. A disordered region spans residues 1–27 (MERAIQGNDTREQANGERWDGGSGGIT).

It belongs to the tombusvirus protein p19 family. Homodimer.

In terms of biological role, acts as a suppressor of RNA-mediated gene silencing, also known as post-transcriptional gene silencing (PTGS), a mechanism of plant viral defense that limits the accumulation of viral RNAs. Binds to short interfering RNAs (siRNAs) with high affinity. Acts as a molecular caliper to specifically select siRNAs based on the length of the duplex region of the RNA. The polypeptide is RNA silencing suppressor p19 (Dianthus caryophyllus (Carnation)).